We begin with the raw amino-acid sequence, 412 residues long: UPF0761 membrane protein lpg0643 (412 aa).

6 consecutive transmembrane segments (helical) span residues Ala36 to Phe56, Leu99 to Glu119, Ala137 to Ala157, Ile177 to Val197, Gly210 to Ile230, and Ala241 to Leu261.

It belongs to the UPF0761 family.

It localises to the cell inner membrane. This is UPF0761 membrane protein lpg0643 from Legionella pneumophila subsp. pneumophila (strain Philadelphia 1 / ATCC 33152 / DSM 7513).